Here is a 582-residue protein sequence, read N- to C-terminus: Heterogeneous nuclear ribonucleoprotein C homolog (582 aa).

The tract at residues methionine 1 to glycine 21 is disordered. 3 consecutive C2H2-type zinc fingers follow at residues tyrosine 102 to histidine 125, serine 130 to histidine 154, and tyrosine 213 to histidine 235.

Its subcellular location is the nucleus. The protein is Heterogeneous nuclear ribonucleoprotein C homolog of Caenorhabditis elegans.